A 553-amino-acid polypeptide reads, in one-letter code: Non-SCF-type F-box protein ROY1 (553 aa).

In terms of domain architecture, F-box spans phenylalanine 3 to isoleucine 49.

In terms of assembly, interacts with SKP1 and YPT32; SKP1 is required for the interaction with YPT32.

It localises to the cytoplasm. Its subcellular location is the nucleus. The protein resides in the cytoplasmic vesicle membrane. Non-SCF-type F-box protein involved in the endocytic with the vacuolar sorting pathway. Acts as a repressor of YPT52 by inhibiting the formation of active, GTP-bound, YPT52. Involved in the defense mechanism against methylmercury toxicity. The sequence is that of Non-SCF-type F-box protein ROY1 (ROY1) from Saccharomyces cerevisiae (strain ATCC 204508 / S288c) (Baker's yeast).